The chain runs to 71 residues: AGEECDCGSPANPCCDAATCKLRPGAQCADGLCCDQCRFIKKGKICRRARGDNPDDRCTGQSADCPRNRFH.

A Disintegrin domain is found at 1-71 (AGEECDCGSP…SADCPRNRFH (71 aa)). Intrachain disulfides connect Cys-5/Cys-20, Cys-7/Cys-15, Cys-14/Cys-37, Cys-28/Cys-34, Cys-33/Cys-58, and Cys-46/Cys-65. A Cell attachment site motif is present at residues 50 to 52 (RGD). The segment at 50 to 71 (RGDNPDDRCTGQSADCPRNRFH) is disordered.

This sequence belongs to the venom metalloproteinase (M12B) family. P-II subfamily. P-IIa sub-subfamily. As to quaternary structure, monomer (disintegrin). Expressed by the venom gland.

The protein localises to the secreted. Its function is as follows. Inhibits fibrinogen interaction with platelets. Acts by binding to alpha-IIb/beta-3 (ITGA2B/ITGB3) on the platelet surface and inhibits aggregation induced by ADP, thrombin, platelet-activating factor and collagen. This chain is Disintegrin viridin, found in Crotalus viridis viridis (Prairie rattlesnake).